Consider the following 592-residue polypeptide: MRSHYCGDVNKSHVGQEVTLVGWVNRSRDLGGVVFLDLRDREGLVQVVYDPDLPEVFAVASTLRAEFCVQVKGVVRARPDSQVNGQMKTGEIEVLGKALTIINAADPLPLSLDNYQNNSEEQRLKYRYLDLRRPEMAQRLMFRAKVTSAVRRFLDSNGFLDIETPILTKATPEGARDYLVPSRTYKGQFFALPQSPQLFKQLLMMSGFDRYYQIVKCFRDEDLRADRQPEFTQIDIETSFMTSEQVMAKTEEMMRGLFLEMLNVDLGEFPRMTYNEAMRRFGSDKPDLRNPLELVDIADLLKEVEFAVFSAPANDEEGRVAVLRIPGGAALSRKQIDDYTKFVGIYGAKGLAWMKINDLSLGLEGIQSPVLKFLNESIVNEIISRTGAQTGDIILFGADQATVVAESMGALRLKAGEDFSLLQGEWRPLWVVDFPMFEKINGNFHAVHHPFTAPRGVTAAELEANPANRVSDAYDMVLNGCELGGGSVRIHNQEMQSAVFRILGITDDEAKEKFGFLLEALRYGTPPHAGLAFGLDRIIMLMTGASSIRDVMAFPKTTTAACPLTNAPGFANPQQLAELGIAVVEKAVKTEG.

Residue glutamate 173 participates in L-aspartate binding. The tract at residues 197–200 (QLFK) is aspartate. Arginine 219 is a binding site for L-aspartate. ATP contacts are provided by residues 219 to 221 (RDE) and glutamine 228. Histidine 448 contributes to the L-aspartate binding site. Glutamate 482 lines the ATP pocket. Arginine 489 is an L-aspartate binding site. 534-537 (GLDR) is an ATP binding site.

This sequence belongs to the class-II aminoacyl-tRNA synthetase family. Type 1 subfamily. As to quaternary structure, homodimer.

The protein localises to the cytoplasm. It catalyses the reaction tRNA(Asp) + L-aspartate + ATP = L-aspartyl-tRNA(Asp) + AMP + diphosphate. Functionally, catalyzes the attachment of L-aspartate to tRNA(Asp) in a two-step reaction: L-aspartate is first activated by ATP to form Asp-AMP and then transferred to the acceptor end of tRNA(Asp). The protein is Aspartate--tRNA ligase of Shewanella putrefaciens (strain CN-32 / ATCC BAA-453).